A 71-amino-acid polypeptide reads, in one-letter code: Small ribosomal subunit protein bS21 (71 aa).

The protein belongs to the bacterial ribosomal protein bS21 family.

This is Small ribosomal subunit protein bS21 from Shewanella woodyi (strain ATCC 51908 / MS32).